The following is a 316-amino-acid chain: Ribosomal RNA small subunit methyltransferase H (316 aa).

Residues 42-44 (GGH), Asp62, Phe86, Asp104, and Gln111 each bind S-adenosyl-L-methionine.

It belongs to the methyltransferase superfamily. RsmH family.

It is found in the cytoplasm. It carries out the reaction cytidine(1402) in 16S rRNA + S-adenosyl-L-methionine = N(4)-methylcytidine(1402) in 16S rRNA + S-adenosyl-L-homocysteine + H(+). In terms of biological role, specifically methylates the N4 position of cytidine in position 1402 (C1402) of 16S rRNA. This is Ribosomal RNA small subunit methyltransferase H from Polynucleobacter necessarius subsp. necessarius (strain STIR1).